We begin with the raw amino-acid sequence, 541 residues long: L-ornithine N(5)-monooxygenase (541 aa).

FAD-binding positions include 50–58 and glutamine 69; that span reads EKQPEFQWH. Position 74 (lysine 74) interacts with substrate. Position 223-226 (223-226) interacts with NADP(+); that stretch reads SGQS. Residues 269–272 and asparagine 300 contribute to the substrate site; that span reads NEIF. NADP(+) is bound at residue 300 to 302; sequence NYS. The tract at residues 430-474 is disordered; that stretch reads TEIPKGPDGSLFDASEEEATWRPASPITPASPSPPSTPTSSALSQ. 520 to 522 contacts FAD; it reads SLL. Serine 523 contacts substrate.

Belongs to the lysine N(6)-hydroxylase/L-ornithine N(5)-oxygenase family. Homotetramer. The cofactor is FAD.

The catalysed reaction is L-ornithine + NADPH + O2 = N(5)-hydroxy-L-ornithine + NADP(+) + H2O. It catalyses the reaction L-ornithine + NADH + O2 = N(5)-hydroxy-L-ornithine + NAD(+) + H2O. It participates in siderophore biosynthesis. In terms of biological role, L-ornithine N(5)-monooxygenase; part of the siderophore basidioferrin biosynthetic pathway. The biosynthesis of basidioferrin depends on the hydroxylation of ornithine to N(5)-hydroxyornithine, catalyzed by the monooxygenase SMO1. The second step, the acylation of N(5)-hydroxy-L-ornithine is catalyzed by a not yet identified N-acyltransferase. Finally, assembly of basidioferrin is catalyzed by the nonribosomal peptide synthase (NRPS) NPS2 via amide bond formation between three L-AHO molecules to release the linear L-AHO trimer. The chain is L-ornithine N(5)-monooxygenase (SMO1) from Ceriporiopsis subvermispora (strain B) (White-rot fungus).